The sequence spans 434 residues: Bestrophin homolog 12 (434 aa).

Helical transmembrane passes span 31-51 (KVIL…FLVF), 76-96 (VCIP…DQWE), 244-264 (IPIP…YFFF), and 278-298 (WALS…FLVG).

It belongs to the anion channel-forming bestrophin (TC 1.A.46) family. Calcium-sensitive chloride channel subfamily. Forms oligomers.

It is found in the cell membrane. Functionally, forms chloride channels. This is Bestrophin homolog 12 (best-12) from Caenorhabditis elegans.